Consider the following 103-residue polypeptide: Small ribosomal subunit protein uS10 (103 aa).

Belongs to the universal ribosomal protein uS10 family. As to quaternary structure, part of the 30S ribosomal subunit.

Its function is as follows. Involved in the binding of tRNA to the ribosomes. In Borrelia recurrentis (strain A1), this protein is Small ribosomal subunit protein uS10.